The chain runs to 151 residues: Large ribosomal subunit protein uL13 (151 aa).

The segment at proline 129–serine 151 is disordered. The segment covering histidine 131–glutamate 140 has biased composition (basic and acidic residues).

The protein belongs to the universal ribosomal protein uL13 family. Part of the 50S ribosomal subunit.

In terms of biological role, this protein is one of the early assembly proteins of the 50S ribosomal subunit, although it is not seen to bind rRNA by itself. It is important during the early stages of 50S assembly. In Trichormus variabilis (strain ATCC 29413 / PCC 7937) (Anabaena variabilis), this protein is Large ribosomal subunit protein uL13.